Here is a 300-residue protein sequence, read N- to C-terminus: Ribosomal protein L11 methyltransferase (300 aa).

The S-adenosyl-L-methionine site is built by Thr-152, Gly-173, Asp-195, and Asn-234.

Belongs to the methyltransferase superfamily. PrmA family.

The protein localises to the cytoplasm. It carries out the reaction L-lysyl-[protein] + 3 S-adenosyl-L-methionine = N(6),N(6),N(6)-trimethyl-L-lysyl-[protein] + 3 S-adenosyl-L-homocysteine + 3 H(+). In terms of biological role, methylates ribosomal protein L11. This is Ribosomal protein L11 methyltransferase from Burkholderia pseudomallei (strain K96243).